The sequence spans 150 residues: MIFTKVDALVKDIDVDKYHIETVILSSDDLNKKIIRVKSDHGNEFGIRLDKGQKLQNGSAFFIDDHHVLAIGVESQDLIVISPKDMDEMGITAHILGNTHKPIEVKDAKIYLEVDPVVEQVLTQKEIAYTIEEVVLDKPLRHVNLTAHEH.

Belongs to the UreE family.

It localises to the cytoplasm. Functionally, involved in urease metallocenter assembly. Binds nickel. Probably functions as a nickel donor during metallocenter assembly. This is Urease accessory protein UreE from Streptococcus salivarius (strain 57.I).